Reading from the N-terminus, the 328-residue chain is GTPase Obg (328 aa).

Residues 1-159 (MNFIDEVKIY…MWVQLSLKLL (159 aa)) form the Obg domain. Residues 160-327 (SDVGLVGLPN…IIKLALQTIK (168 aa)) form the OBG-type G domain. Residues 166 to 173 (GLPNAGKS), 191 to 195 (FTTLV), 212 to 215 (DIPG), 279 to 282 (NKID), and 308 to 310 (STY) contribute to the GTP site. Positions 173 and 193 each coordinate Mg(2+).

It belongs to the TRAFAC class OBG-HflX-like GTPase superfamily. OBG GTPase family. As to quaternary structure, monomer. The cofactor is Mg(2+).

It is found in the cytoplasm. In terms of biological role, an essential GTPase which binds GTP, GDP and possibly (p)ppGpp with moderate affinity, with high nucleotide exchange rates and a fairly low GTP hydrolysis rate. Plays a role in control of the cell cycle, stress response, ribosome biogenesis and in those bacteria that undergo differentiation, in morphogenesis control. This chain is GTPase Obg, found in Rickettsia bellii (strain RML369-C).